The sequence spans 622 residues: 1-deoxy-D-xylulose-5-phosphate synthase (622 aa).

Residues His-80 and 121 to 123 (GHS) contribute to the thiamine diphosphate site. Mg(2+) is bound at residue Asp-152. Residues 153–154 (GA), Asn-181, Tyr-288, and Glu-370 contribute to the thiamine diphosphate site. Asn-181 contributes to the Mg(2+) binding site.

The protein belongs to the transketolase family. DXPS subfamily. As to quaternary structure, homodimer. Mg(2+) serves as cofactor. Requires thiamine diphosphate as cofactor.

It catalyses the reaction D-glyceraldehyde 3-phosphate + pyruvate + H(+) = 1-deoxy-D-xylulose 5-phosphate + CO2. It participates in metabolic intermediate biosynthesis; 1-deoxy-D-xylulose 5-phosphate biosynthesis; 1-deoxy-D-xylulose 5-phosphate from D-glyceraldehyde 3-phosphate and pyruvate: step 1/1. Catalyzes the acyloin condensation reaction between C atoms 2 and 3 of pyruvate and glyceraldehyde 3-phosphate to yield 1-deoxy-D-xylulose-5-phosphate (DXP). The sequence is that of 1-deoxy-D-xylulose-5-phosphate synthase from Shewanella amazonensis (strain ATCC BAA-1098 / SB2B).